A 131-amino-acid polypeptide reads, in one-letter code: UPF0102 protein YraN (131 aa).

Residues 1 to 19 (MATVPTRSGSPRQLTTKQT) are compositionally biased toward polar residues. The disordered stretch occupies residues 1–21 (MATVPTRSGSPRQLTTKQTGD).

Belongs to the UPF0102 family.

This Escherichia coli (strain K12 / MC4100 / BW2952) protein is UPF0102 protein YraN.